We begin with the raw amino-acid sequence, 355 residues long: UDP-N-acetylglucosamine--N-acetylmuramyl-(pentapeptide) pyrophosphoryl-undecaprenol N-acetylglucosamine transferase (355 aa).

Residues 15-17 (TGG), N127, R163, S191, I244, 263-268 (ALTVSE), and Q288 each bind UDP-N-acetyl-alpha-D-glucosamine.

It belongs to the glycosyltransferase 28 family. MurG subfamily.

It is found in the cell inner membrane. It carries out the reaction di-trans,octa-cis-undecaprenyl diphospho-N-acetyl-alpha-D-muramoyl-L-alanyl-D-glutamyl-meso-2,6-diaminopimeloyl-D-alanyl-D-alanine + UDP-N-acetyl-alpha-D-glucosamine = di-trans,octa-cis-undecaprenyl diphospho-[N-acetyl-alpha-D-glucosaminyl-(1-&gt;4)]-N-acetyl-alpha-D-muramoyl-L-alanyl-D-glutamyl-meso-2,6-diaminopimeloyl-D-alanyl-D-alanine + UDP + H(+). It functions in the pathway cell wall biogenesis; peptidoglycan biosynthesis. Functionally, cell wall formation. Catalyzes the transfer of a GlcNAc subunit on undecaprenyl-pyrophosphoryl-MurNAc-pentapeptide (lipid intermediate I) to form undecaprenyl-pyrophosphoryl-MurNAc-(pentapeptide)GlcNAc (lipid intermediate II). The protein is UDP-N-acetylglucosamine--N-acetylmuramyl-(pentapeptide) pyrophosphoryl-undecaprenol N-acetylglucosamine transferase of Escherichia coli (strain 55989 / EAEC).